A 575-amino-acid chain; its full sequence is 2-isopropylmalate synthase (575 aa).

Residues 40–314 (PRWCAVDLRD…DPQIDFSDID (275 aa)) enclose the Pyruvate carboxyltransferase domain. Mg(2+) is bound by residues Asp-49, His-253, His-255, and Asn-289. The interval 456-575 (SGSGTPEWGR…IVSAVNRALR (120 aa)) is regulatory domain.

This sequence belongs to the alpha-IPM synthase/homocitrate synthase family. LeuA type 2 subfamily. Homodimer. Mg(2+) is required as a cofactor.

The protein resides in the cytoplasm. It carries out the reaction 3-methyl-2-oxobutanoate + acetyl-CoA + H2O = (2S)-2-isopropylmalate + CoA + H(+). The protein operates within amino-acid biosynthesis; L-leucine biosynthesis; L-leucine from 3-methyl-2-oxobutanoate: step 1/4. In terms of biological role, catalyzes the condensation of the acetyl group of acetyl-CoA with 3-methyl-2-oxobutanoate (2-ketoisovalerate) to form 3-carboxy-3-hydroxy-4-methylpentanoate (2-isopropylmalate). This Kineococcus radiotolerans (strain ATCC BAA-149 / DSM 14245 / SRS30216) protein is 2-isopropylmalate synthase.